A 239-amino-acid chain; its full sequence is Immunoglobulin superfamily member 23 (239 aa).

Residues 63-93 (ELEAQPPTSSSPKGLPGRPRTSQEVPNAEDN) form a disordered region. Residues 94 to 179 (PSLIPLVTFP…ELVSEPVTVS (86 aa)) enclose the Ig-like domain. The helical transmembrane segment at 214 to 234 (LIVAATIGGLVLIGSVCFYIL) threads the bilayer.

It is found in the cell membrane. In terms of biological role, may be involved in osteoclast differentiation. This is Immunoglobulin superfamily member 23 from Mus musculus (Mouse).